The primary structure comprises 60 residues: Cytochrome c oxidase subunit 9, mitochondrial (60 aa).

Over M1–D18 the chain is Mitochondrial matrix. A helical transmembrane segment spans residues I19 to F37. Residues H38–A57 lie on the Mitochondrial intermembrane side of the membrane. A propeptide spans A58–E60 (removed in mature form).

It belongs to the fungal cytochrome c oxidase subunit 7a family. Component of the cytochrome c oxidase (complex IV, CIV), a multisubunit enzyme composed of a catalytic core of 3 subunits and several supernumerary subunits. The complex exists as a monomer or a dimer and forms supercomplexes (SCs) in the inner mitochondrial membrane with ubiquinol-cytochrome c oxidoreductase (cytochrome b-c1 complex, complex III, CIII).

The protein resides in the mitochondrion inner membrane. It functions in the pathway energy metabolism; oxidative phosphorylation. In terms of biological role, component of the cytochrome c oxidase, the last enzyme in the mitochondrial electron transport chain which drives oxidative phosphorylation. The respiratory chain contains 3 multisubunit complexes succinate dehydrogenase (complex II, CII), ubiquinol-cytochrome c oxidoreductase (cytochrome b-c1 complex, complex III, CIII) and cytochrome c oxidase (complex IV, CIV), that cooperate to transfer electrons derived from NADH and succinate to molecular oxygen, creating an electrochemical gradient over the inner membrane that drives transmembrane transport and the ATP synthase. Cytochrome c oxidase is the component of the respiratory chain that catalyzes the reduction of oxygen to water. Electrons originating from reduced cytochrome c in the intermembrane space (IMS) are transferred via the dinuclear copper A center (CU(A)) of subunit 2 and heme A of subunit 1 to the active site in subunit 1, a binuclear center (BNC) formed by heme A3 and copper B (CU(B)). The BNC reduces molecular oxygen to 2 water molecules using 4 electrons from cytochrome c in the IMS and 4 protons from the mitochondrial matrix. The sequence is that of Cytochrome c oxidase subunit 9, mitochondrial (COX9) from Eremothecium gossypii (strain ATCC 10895 / CBS 109.51 / FGSC 9923 / NRRL Y-1056) (Yeast).